We begin with the raw amino-acid sequence, 418 residues long: UDP-N-acetylglucosamine 1-carboxyvinyltransferase (418 aa).

23 to 24 is a phosphoenolpyruvate binding site; that stretch reads KN. UDP-N-acetyl-alpha-D-glucosamine is bound at residue Arg92. Cys116 acts as the Proton donor in catalysis. Cys116 is subject to 2-(S-cysteinyl)pyruvic acid O-phosphothioketal. UDP-N-acetyl-alpha-D-glucosamine contacts are provided by residues 121–125, 161–164, Asp306, and Ile328; these read RPVDL and KVSV.

Belongs to the EPSP synthase family. MurA subfamily.

Its subcellular location is the cytoplasm. It catalyses the reaction phosphoenolpyruvate + UDP-N-acetyl-alpha-D-glucosamine = UDP-N-acetyl-3-O-(1-carboxyvinyl)-alpha-D-glucosamine + phosphate. It functions in the pathway cell wall biogenesis; peptidoglycan biosynthesis. In terms of biological role, cell wall formation. Adds enolpyruvyl to UDP-N-acetylglucosamine. This chain is UDP-N-acetylglucosamine 1-carboxyvinyltransferase, found in Vibrio parahaemolyticus serotype O3:K6 (strain RIMD 2210633).